Reading from the N-terminus, the 883-residue chain is Phosphoenolpyruvate carboxylase (883 aa).

Residues His-138 and Lys-546 contribute to the active site.

This sequence belongs to the PEPCase type 1 family. The cofactor is Mg(2+).

It catalyses the reaction oxaloacetate + phosphate = phosphoenolpyruvate + hydrogencarbonate. In terms of biological role, forms oxaloacetate, a four-carbon dicarboxylic acid source for the tricarboxylic acid cycle. The sequence is that of Phosphoenolpyruvate carboxylase from Salmonella dublin (strain CT_02021853).